The sequence spans 41 residues: Photosystem I reaction center subunit IX (41 aa).

A helical membrane pass occupies residues 7-29 (YLSTAPVLLTVWLSITASGIMII).

Belongs to the PsaJ family.

It is found in the plastid. The protein resides in the chloroplast thylakoid membrane. Functionally, may help in the organization of the PsaE and PsaF subunits. This Heterosigma akashiwo (strain NIES-293 / 8280G21-1) protein is Photosystem I reaction center subunit IX.